We begin with the raw amino-acid sequence, 231 residues long: Small ribosomal subunit protein uS3 (231 aa).

Positions 39 to 107 constitute a KH type-2 domain; sequence IRKFIKEKLF…QVSVNIVEIK (69 aa).

Belongs to the universal ribosomal protein uS3 family. As to quaternary structure, part of the 30S ribosomal subunit. Forms a tight complex with proteins S10 and S14.

Binds the lower part of the 30S subunit head. Binds mRNA in the 70S ribosome, positioning it for translation. This Pelotomaculum thermopropionicum (strain DSM 13744 / JCM 10971 / SI) protein is Small ribosomal subunit protein uS3.